The following is a 702-amino-acid chain: BRCA1-associated RING domain protein 1 (702 aa).

Residues 18–67 (CVKCKKPRGDLQYLGSSCKHAYCWECIATFQQKPSGKRSSVARHMCPSCA) form an RING-type zinc finger. Disordered regions lie at residues 153–205 (DENR…TSVK) and 281–346 (ASMS…YGTR). The span at 174–188 (ASPTRNSTKRPSTVS) shows a compositional bias: polar residues. The segment covering 312 to 321 (IKSDKIERRS) has biased composition (basic and acidic residues). ANK repeat units follow at residues 347-376 (RGEAVLVNSIRNNRIPQLRSAVEAGTCVNE), 379-408 (DGKTPLYVAVENSSLEAVKILVEAGAVINA), and 413-442 (TLETTLHEAVRRQNTQIVEYLLSKGASIKI). The BRCT domain occupies 601–702 (MQPKLFAGCK…LGCSITTPPH (102 aa)).

As to quaternary structure, heterodimer (via RING-type zinc finger) with brc-1 to form the core CeBCD complex. Brc-1-brd-1 heterodimer-containing CeBCD complexes bound to chromatin are activated as an E3-ubiquitin ligase in response to DNA damage. The heterodimer interacts with the recombinase rad-51 following ionizing irradiation; the interaction is direct. The heterodimer interacts the E2-ubiquitin-conjugating enzyme let-70 following ionizing irradiation. The heterodimer interacts with the pro-crossover proteins msh-5 and syp-3. Interacts with smt-3, tac-1 and ubc-9. In terms of processing, autoubiquitinated. Post-translationally, phosphorylation of CeBCD complexes is required for E3 ubiquitin-protein ligase activity.

It is found in the cytoplasm. Its subcellular location is the nucleus. The protein localises to the chromosome. It carries out the reaction S-ubiquitinyl-[E2 ubiquitin-conjugating enzyme]-L-cysteine + [acceptor protein]-L-lysine = [E2 ubiquitin-conjugating enzyme]-L-cysteine + N(6)-ubiquitinyl-[acceptor protein]-L-lysine.. It participates in protein modification; protein ubiquitination. Its activity is regulated as follows. E3 ubiquitin-protein ligase activity of CeBCD complexes occurs at DNA damage sites. Following DNA damage, E3 ubiquitin-protein ligase activity is reduced by caffeine treatment (inhibitor of ATM and ATK kinase activity). Constituent of the CeBCD complex that possesses E3 ubiquitin-protein ligase activity. When bound to chromatin, the brc-1-brd-1 heterodimer within the CeBCD complex is inactive during normal conditions, but in response to DNA damage, the brc-1-brd-1 heterodimer associates with other proteins such as the recombinase rad-51 or the E2-ubiquitin-conjugating enzyme let-70, which activate the CeBCD complex as an E3-ubiquitin ligase. Moreover, association between the brc-1-brd-1 heterodimer and rad-51 and let-70, probably requires DNA checkpoint proteins such as atl-1 and mre-11 in order to induce ubiquitination at DNA damage sites. To this end, the brc-1-brd-1 heterodimer coordinates a diverse range of cellular pathways such as DNA damage repair, ubiquitination and transcriptional regulation to maintain genomic stability. Plays a role in triggering cellular responses at damage sites in response to DNA damage that may be induced by ionizing radiation for example. In particular, protects against chromosome non-disjunction and nuclear fragmentation during meiotic double-strand break repair to ensure sister chromatid recombination and aid chromosome stability. The protein is BRCA1-associated RING domain protein 1 of Caenorhabditis elegans.